The primary structure comprises 1200 residues: MVYVKRIELSHFKSFGGTTAIPFLPGFTVVSGPNGSGKSNILDALLFCLGLATSKGMRAERLPDLVNNTFKGNRGSSEASVSVTFELHDGENLSEPGANHNGNGNGAKISKEWTVTRRLKVTKGGNYSSNYYINGETATVTELHEQLNELRIYPEGYNIVLQGDVTRIITMNSKERREIIDELAGVAEFDRKIVKTKETLTEVQDREERCQIIATELERTLERLAADRQKAEKYQALRQQVQEKQGWAKVIQYKAVEQQRQKLWGQLERDREQSQQIQQALDQRSQAIQTQQTELEKLNAQVKALGEEEQLAVAAQLATQKAQRDQLQQRYNDGDRQITNHQQQVGQIQAEISQSQQQFLHIQQEKSFHNTQTLPQLEAAVQTSQQQLEQLRHQAQAIASASEAWVQEQTQLSRTVNQLQDELIPQRSQLAQLEERQQQLLTNLAELTPLLTKVSVELEEKQFAQGQFNFQGEALTSQIQTLASDLAQLEQERSLLQETQTRLLKEQQEKQRQLDKLEAASQAQQEVQGTYATKVILQSDLPGVCGLVAQLGQVEPQYQLALEIAAGGRLGFLVVEDDGVAAAGIEILKQAKAGRATFLPLNKIRPPKGQNPNLSYAHGYIDLAVNLIDGDRRYADIFAFIFGNTIVFDTLVNARNHLGKHRIVTLEGDLLEASGAMSGGSRNQRSGLRFGTMVSEDTAEVKQLRQRLQDIQQVQGRNEELLLERTVRSRQLTQQLMEMRQQQREAQLHGEQTERDIARLSQQQTQINQQQINQQQKLAELQQNLALLQQSLPPLEQQLASAQQQLTALETSQTHQQWQTIQIQIRTVEAEYQRQLQALRQGEDHLKDLQNSSQRLEEKIAQAQEKIAQHQAQDLTLAQEQEQLKIALAEMNGAIQTTEAQLAKLSEKLGSTKQERDRLETQLNQLRSQQQEQQWQWEKLQTNQQEYQENLTQLQTQLEALEQDLPDPWPEIPLLQDRDEANLDFANILEELERSIRNGQKRLEAMEPVNMLALQEYEKTEARLGELSEKLQTIAGERTELLLRIENFTTLRRRSFQDAFDAVNKNFQIIFAELSDGDGYLQLDDAEDPFNGGLNLVAHPKGKPVRRLSSMSGGEKSLTALSFIFALQRYRPSPFYGFDEVDMFLDGANVEKLSKMVRKQAQQAQFIVVSLRRPMIEAAERTIGVTQARGAHTQVLGIKL.

33 to 40 (PNGSGKSN) is an ATP binding site. The disordered stretch occupies residues 90–109 (GENLSEPGANHNGNGNGAKI). Residues 202–528 (EVQDREERCQ…AASQAQQEVQ (327 aa)) adopt a coiled-coil conformation. In terms of domain architecture, SMC hinge spans 542–656 (PGVCGLVAQL…VFDTLVNARN (115 aa)). Residues 692 to 1046 (TMVSEDTAEV…ERTELLLRIE (355 aa)) are a coiled coil.

The protein belongs to the SMC family. As to quaternary structure, homodimer.

Its subcellular location is the cytoplasm. Its function is as follows. Required for chromosome condensation and partitioning. In Synechocystis sp. (strain ATCC 27184 / PCC 6803 / Kazusa), this protein is Chromosome partition protein Smc.